A 716-amino-acid polypeptide reads, in one-letter code: Probable basic-leucine zipper transcription factor O (716 aa).

Residues 20 to 142 (LLDDFSQLQQ…YQQRQQQYQD (123 aa)) adopt a coiled-coil conformation. A disordered region spans residues 173-233 (SINYNMNNNN…NNKTTDNINN (61 aa)). Residues 381 to 444 (KSTESIKKMN…SVDLMKPSND (64 aa)) form the bZIP domain. The segment at 387–403 (KKMNQNKASRNYRQKKK) is basic motif. A leucine-zipper region spans residues 406-413 (IKEIEDKL).

This sequence belongs to the bZIP family.

The protein localises to the nucleus. Functionally, probable transcriptional regulator. The sequence is that of Probable basic-leucine zipper transcription factor O (bzpO) from Dictyostelium discoideum (Social amoeba).